Consider the following 209-residue polypeptide: Phosphopantothenoylcysteine decarboxylase (209 aa).

FMN contacts are provided by residues 28 to 30 (GSV) and 53 to 55 (TKS). His90 serves as the catalytic Proton donor. FMN-binding positions include 106-109 (SANT) and Ala140. N-[(R)-4-phosphopantothenoyl]-L-cysteine-binding residues include Asn142, Arg172, and Ala174. Residue Cys175 is the Proton donor of the active site. N-[(R)-4-phosphopantothenoyl]-L-cysteine is bound at residue Met183.

This sequence belongs to the HFCD (homooligomeric flavin containing Cys decarboxylase) superfamily. As to quaternary structure, homotrimer. The cofactor is FMN. As to expression, expressed in roots, shoots, leaves, flowers, developing siliques and seeds with highest expression in seed embryos and phloem.

The catalysed reaction is N-[(R)-4-phosphopantothenoyl]-L-cysteine + H(+) = (R)-4'-phosphopantetheine + CO2. The protein operates within cofactor biosynthesis; coenzyme A biosynthesis; CoA from (R)-pantothenate: step 3/5. Involved in plant growth, and salt and osmotic tolerance. Catalyzes the decarboxylation of 4'-phosphopantothenoylcysteine to 4'-phosphopantetheine, a key step in coenzyme A biosynthesis. The enzyme is also able to decarboxylate pantothenoylcysteine to pantothenoylcysteamine. In Arabidopsis thaliana (Mouse-ear cress), this protein is Phosphopantothenoylcysteine decarboxylase.